The chain runs to 305 residues: NAD kinase (305 aa).

Asp-82 serves as the catalytic Proton acceptor. Residues 82–83 (DG), 156–157 (ND), Arg-184, Asp-186, 197–202 (TAYALS), Ala-221, and Gln-255 each bind NAD(+).

Belongs to the NAD kinase family. A divalent metal cation serves as cofactor.

The protein resides in the cytoplasm. It catalyses the reaction NAD(+) + ATP = ADP + NADP(+) + H(+). Its function is as follows. Involved in the regulation of the intracellular balance of NAD and NADP, and is a key enzyme in the biosynthesis of NADP. Catalyzes specifically the phosphorylation on 2'-hydroxyl of the adenosine moiety of NAD to yield NADP. This Cupriavidus pinatubonensis (strain JMP 134 / LMG 1197) (Cupriavidus necator (strain JMP 134)) protein is NAD kinase.